The following is a 337-amino-acid chain: Anthranilate phosphoribosyltransferase (337 aa).

5-phospho-alpha-D-ribose 1-diphosphate is bound by residues glycine 81, 84–85 (GD), serine 89, 91–94 (NVST), 109–117 (KHGNRAASS), and alanine 121. Glycine 81 is a binding site for anthranilate. A Mg(2+)-binding site is contributed by serine 93. Asparagine 112 provides a ligand contact to anthranilate. Arginine 167 serves as a coordination point for anthranilate. Mg(2+)-binding residues include aspartate 226 and glutamate 227.

It belongs to the anthranilate phosphoribosyltransferase family. Homodimer. It depends on Mg(2+) as a cofactor.

It catalyses the reaction N-(5-phospho-beta-D-ribosyl)anthranilate + diphosphate = 5-phospho-alpha-D-ribose 1-diphosphate + anthranilate. The protein operates within amino-acid biosynthesis; L-tryptophan biosynthesis; L-tryptophan from chorismate: step 2/5. In terms of biological role, catalyzes the transfer of the phosphoribosyl group of 5-phosphorylribose-1-pyrophosphate (PRPP) to anthranilate to yield N-(5'-phosphoribosyl)-anthranilate (PRA). This is Anthranilate phosphoribosyltransferase from Methylobacterium sp. (strain 4-46).